Reading from the N-terminus, the 210-residue chain is Mitochondrial cardiolipin hydrolase (210 aa).

Residues 1–5 (MLLWG) lie on the Mitochondrial intermembrane side of the membrane. Residues 6–24 (RWKLAAGLAGLALSLELFY) form a helical membrane-spanning segment. Topologically, residues 25–210 (RYMRRRKPLR…YNFFPEKENK (186 aa)) are cytoplasmic. Residues 138–165 (SSGYMHHKFAVVDGTVVLTGSLNWTVQA) form the PLD phosphodiesterase domain. Residues His143, Lys145, and Asp150 contribute to the active site.

Belongs to the phospholipase D family. MitoPLD/Zucchini subfamily. As to quaternary structure, homodimer.

Its subcellular location is the mitochondrion outer membrane. It catalyses the reaction a cardiolipin + H2O = a 1,2-diacyl-sn-glycero-3-phospho-(1'-sn-glycerol) + a 1,2-diacyl-sn-glycero-3-phosphate + H(+). In terms of biological role, presents phospholipase and nuclease activities, depending on the different physiological conditions. Plays a key role in mitochondrial fusion and fission via its phospholipase activity. In its phospholipase role, it uses the mitochondrial lipid cardiolipin as substrate to generate phosphatidate (PA or 1,2-diacyl-sn-glycero-3-phosphate), a second messenger signaling lipid. Production of PA facilitates Mitofusin-mediated fusion, whereas the cleavage of PA by the Lipin family of phosphatases produces diacylgycerol (DAG) which promotes mitochondrial fission. Regulates mitochondrial shape through facilitating mitochondrial fusion. During spermatogenesis, plays a critical role in PIWI-interacting RNA (piRNA) biogenesis. piRNAs provide essential protection against the activity of mobile genetic elements. piRNA-mediated transposon silencing is thus critical for maintaining genome stability, in particular in germline cells when transposons are mobilized as a consequence of wide-spread genomic demethylation. Has been shown to be a backbone-non-specific, single strand-specific nuclease, cleaving either RNA or DNA substrates with similar affinity. Produces 5' phosphate and 3' hydroxyl termini, suggesting it could directly participate in the processing of primary piRNA transcripts. Has been proposed to act as a cardiolipin hydrolase to generate phosphatidic acid at mitochondrial surface. Although it cannot be excluded that it can act as a phospholipase in some circumstances, this activity could not be confirmed. The sequence is that of Mitochondrial cardiolipin hydrolase (pld6) from Xenopus laevis (African clawed frog).